The chain runs to 147 residues: MVILLGPLLLVFMLGLGLAPLSLAKDEDRYTHFLTQHYDAKPKGRDGRYCESIMKQRGLTRPCKEVNTFIHGTRNDIKAICNDKNGEPYNNFRRSKSPFQITTCKHKGGSNRPPCGYRATAGFRTIAVACENGLPVHFDESFIITSQ.

An N-terminal signal peptide occupies residues 1-24; that stretch reads MVILLGPLLLVFMLGLGLAPLSLA. H37 acts as the Proton acceptor in catalysis. R45 and D46 together coordinate tRNA. 3 disulfides stabilise this stretch: C50/C104, C63/C115, and C81/C130. Positions 55–59 match the Nucleolar localization signal motif; sequence KQRGL. The tRNA site is built by C104 and I126. H137 serves as the catalytic Proton donor.

Belongs to the pancreatic ribonuclease family. As to quaternary structure, homodimer. Interacts with RNH1; inhibiting ANG ribonuclease activity. Interacts with PCNA.

The protein localises to the secreted. Its subcellular location is the nucleus. It is found in the nucleolus. It localises to the cytoplasm. The protein resides in the stress granule. Its activity is regulated as follows. Has weak tRNA ribonuclease activity by itself due to partial autoinhibition by its C-terminus, which folds into a short alpha-helix that partially occludes the substrate-binding site. In absence of stress, the ribonuclease activity is inhibited by RNH1 in the cytoplasm. In response to stress, dissociates from RNH1 in the cytoplasm and associates with cytoplasmic ribosomes with vacant A-sites: ribosomes directly activate the tRNA ribonuclease activity of ANG by refolding the C-terminal alpha-helix. In response to stress, the angiogenic activity of ANG is inhibited by RNH1 in the nucleus. Functionally, secreted ribonuclease that can either promote or restrict cell proliferation of target cells, depending on the context. Endocytosed in target cells via its receptor PLXNB2 and translocates to the cytoplasm or nucleus. Under stress conditions, localizes to the cytoplasm and promotes the assembly of stress granules (SGs): specifically cleaves a subset of tRNAs within anticodon loops to produce tRNA-derived stress-induced fragments (tiRNAs), resulting in translation repression and inhibition of cell proliferation. tiRNas also prevent formation of apoptosome, thereby promoting cell survival. Preferentially cleaves RNAs between a pyrimidine and an adenosine residue, suggesting that it cleaves the anticodon loop of tRNA(Ala) (32-UUAGCAU-38) after positions 33 and 36. Cleaves a subset of tRNAs, including tRNA(Ala), tRNA(Glu), tRNA(Gly), tRNA(Lys), tRNA(Val), tRNA(His), tRNA(Asp) and tRNA(Sec). Under growth conditions and in differentiated cells, translocates to the nucleus and stimulates ribosomal RNA (rRNA) transcription, including that containing the initiation site sequences of 45S rRNA, thereby promoting cell growth and proliferation. Angiogenin induces vascularization of normal and malignant tissues via its ability to promote rRNA transcription. Involved in hematopoietic stem and progenitor cell (HSPC) growth and survival by promoting rRNA transcription in growth conditions and inhibiting translation in response to stress, respectively. Mediates the crosstalk between myeloid and intestinal epithelial cells to protect the intestinal epithelial barrier integrity: secreted by myeloid cells and promotes intestinal epithelial cells proliferation and survival. Also mediates osteoclast-endothelial cell crosstalk in growing bone: produced by osteoclasts and protects the neighboring vascular cells against senescence by promoting rRNA transcription. This chain is Angiogenin (ANG), found in Sus scrofa (Pig).